A 347-amino-acid chain; its full sequence is NADH-ubiquinone oxidoreductase chain 2 (347 aa).

11 helical membrane-spanning segments follow: residues 3-23 (PPIFFLIMSTVISGTLIVMTS), 25-45 (HWMLTWIGFEMNMLAIIPILM), 59-79 (YFLTQATASMLLMMGIIINLL), 96-116 (ILMTTALAMKLGLAPFHFWVP), 122-142 (IPLSSGMILLTWQKIAPLSVL), 149-169 (INPNLLLPMATLSVLIGGWGG), 178-198 (ILAYSSIAHMGWMTAILLYNP), 201-221 (MILNLTIYIIMTLTTFMLFML), 237-257 (MPLITSLITMLMLSLGGLPPL), 274-294 (EMIIMPTFLAITALLNLYFYM), and 325-345 (FLPPLIITSTMLLPLTPMISI).

It belongs to the complex I subunit 2 family. In terms of assembly, core subunit of respiratory chain NADH dehydrogenase (Complex I) which is composed of 45 different subunits. Interacts with TMEM242.

Its subcellular location is the mitochondrion inner membrane. The catalysed reaction is a ubiquinone + NADH + 5 H(+)(in) = a ubiquinol + NAD(+) + 4 H(+)(out). Core subunit of the mitochondrial membrane respiratory chain NADH dehydrogenase (Complex I) which catalyzes electron transfer from NADH through the respiratory chain, using ubiquinone as an electron acceptor. Essential for the catalytic activity and assembly of complex I. In Genetta servalina (Servaline genet), this protein is NADH-ubiquinone oxidoreductase chain 2.